The chain runs to 378 residues: Acetylornithine deacetylase (378 aa).

Zn(2+) is bound at residue His-76. Asp-78 is an active-site residue. Residue Asp-108 participates in Zn(2+) binding. Glu-140 is a catalytic residue. Zn(2+) contacts are provided by Glu-141, Glu-165, and His-351.

It belongs to the peptidase M20A family. ArgE subfamily. In terms of assembly, homodimer. It depends on Zn(2+) as a cofactor. Co(2+) is required as a cofactor. Requires glutathione as cofactor.

The protein localises to the cytoplasm. It carries out the reaction N(2)-acetyl-L-ornithine + H2O = L-ornithine + acetate. The protein operates within amino-acid biosynthesis; L-arginine biosynthesis; L-ornithine from N(2)-acetyl-L-ornithine (linear): step 1/1. Its function is as follows. Catalyzes the hydrolysis of the amide bond of N(2)-acetylated L-amino acids. Cleaves the acetyl group from N-acetyl-L-ornithine to form L-ornithine, an intermediate in L-arginine biosynthesis pathway, and a branchpoint in the synthesis of polyamines. The polypeptide is Acetylornithine deacetylase (Vibrio cholerae serotype O1 (strain ATCC 39541 / Classical Ogawa 395 / O395)).